The sequence spans 218 residues: Probable transaldolase (218 aa).

Lys-83 acts as the Schiff-base intermediate with substrate in catalysis.

The protein belongs to the transaldolase family. Type 3B subfamily.

The protein resides in the cytoplasm. The enzyme catalyses D-sedoheptulose 7-phosphate + D-glyceraldehyde 3-phosphate = D-erythrose 4-phosphate + beta-D-fructose 6-phosphate. It participates in carbohydrate degradation; pentose phosphate pathway; D-glyceraldehyde 3-phosphate and beta-D-fructose 6-phosphate from D-ribose 5-phosphate and D-xylulose 5-phosphate (non-oxidative stage): step 2/3. Its function is as follows. Transaldolase is important for the balance of metabolites in the pentose-phosphate pathway. The polypeptide is Probable transaldolase (Parvibaculum lavamentivorans (strain DS-1 / DSM 13023 / NCIMB 13966)).